Reading from the N-terminus, the 1018-residue chain is DNA polymerase gamma (1018 aa).

This sequence belongs to the DNA polymerase type-A family. It depends on Mg(2+) as a cofactor.

It is found in the mitochondrion. The enzyme catalyses DNA(n) + a 2'-deoxyribonucleoside 5'-triphosphate = DNA(n+1) + diphosphate. Functionally, involved in the replication of mitochondrial DNA. The polypeptide is DNA polymerase gamma (mip1) (Schizosaccharomyces pombe (strain 972 / ATCC 24843) (Fission yeast)).